Here is a 225-residue protein sequence, read N- to C-terminus: Uracil-DNA glycosylase (225 aa).

The active-site Proton acceptor is Asp65.

It belongs to the uracil-DNA glycosylase (UDG) superfamily. UNG family.

It is found in the cytoplasm. The catalysed reaction is Hydrolyzes single-stranded DNA or mismatched double-stranded DNA and polynucleotides, releasing free uracil.. Its function is as follows. Excises uracil residues from the DNA which can arise as a result of misincorporation of dUMP residues by DNA polymerase or due to deamination of cytosine. This Alkaliphilus oremlandii (strain OhILAs) (Clostridium oremlandii (strain OhILAs)) protein is Uracil-DNA glycosylase.